The primary structure comprises 475 residues: Bifunctional protein HldE (475 aa).

The tract at residues 1–321 is ribokinase; sequence MADKIDISLY…RALHQITASH (321 aa). Residue 197 to 200 participates in ATP binding; the sequence is NLKE. Asp-266 is an active-site residue. The cytidylyltransferase stretch occupies residues 346–475; that stretch reads MTNGCFDILH…TSRLVEKMLN (130 aa).

The protein in the N-terminal section; belongs to the carbohydrate kinase PfkB family. In the C-terminal section; belongs to the cytidylyltransferase family. Homodimer.

The enzyme catalyses D-glycero-beta-D-manno-heptose 7-phosphate + ATP = D-glycero-beta-D-manno-heptose 1,7-bisphosphate + ADP + H(+). It catalyses the reaction D-glycero-beta-D-manno-heptose 1-phosphate + ATP + H(+) = ADP-D-glycero-beta-D-manno-heptose + diphosphate. It functions in the pathway nucleotide-sugar biosynthesis; ADP-L-glycero-beta-D-manno-heptose biosynthesis; ADP-L-glycero-beta-D-manno-heptose from D-glycero-beta-D-manno-heptose 7-phosphate: step 1/4. Its pathway is nucleotide-sugar biosynthesis; ADP-L-glycero-beta-D-manno-heptose biosynthesis; ADP-L-glycero-beta-D-manno-heptose from D-glycero-beta-D-manno-heptose 7-phosphate: step 3/4. Functionally, catalyzes the phosphorylation of D-glycero-D-manno-heptose 7-phosphate at the C-1 position to selectively form D-glycero-beta-D-manno-heptose-1,7-bisphosphate. Its function is as follows. Catalyzes the ADP transfer from ATP to D-glycero-beta-D-manno-heptose 1-phosphate, yielding ADP-D-glycero-beta-D-manno-heptose. This chain is Bifunctional protein HldE, found in Coxiella burnetii (strain RSA 331 / Henzerling II).